Here is a 250-residue protein sequence, read N- to C-terminus: Doublesex- and mab-3-related transcription factor dmd-3 (250 aa).

A DNA-binding region (DM 1) is located at residues 19 to 68; sequence CQRCLNHGLREKRKNHKLSCTFRFCQCSNCIMVERRRQLNSRLMQIDGSR. Residues 90–100 are compositionally biased toward polar residues; it reads CTSQSETTNES. A disordered region spans residues 90 to 115; the sequence is CTSQSETTNESSGEDKDDGKPKERRP. Over residues 102-115 the composition is skewed to basic and acidic residues; it reads GEDKDDGKPKERRP. The DM 2 DNA-binding region spans 117–164; the sequence is CQRCAQHSVVNRLKGHKRACPFRDCFCAKCQVVVERQKLMADQIKLRR. Positions 166-201 are disordered; sequence QKREKNNLNSEREAPIAHSMTPSPIDTVTTTTTPTS. Over residues 169–180 the composition is skewed to basic and acidic residues; sequence EKNNLNSEREAP. Over residues 186–201 the composition is skewed to low complexity; that stretch reads TPSPIDTVTTTTTPTS.

It belongs to the DMRT family. As to expression, in males, expressed in the tail tip. Specifically, expressed in 15 male-specific muscles of the tail tip called the diagonal muscles, and also in core body muscles of both males and hermaphrodites. In males, expressed in ray A-neurons. In males, expressed in PHC sensory neurons. In males, it is also expressed in the hindgut, B lineage and somatic gonad. In hermaphrodites, expressed in the anchor cell only.

The protein resides in the nucleus. It localises to the perikaryon. Its function is as follows. Transcriptional activator which promotes male-specific development. Acts partially redundantly with the transcription factor mab-3 to coordinate tail tip cell fusion and retraction and thereby regulate male tail tip morphogenesis. This is most likely through the regulation of downstream effectors such as eff-1. May also negatively regulate the expression of other proteins implicated in male tail morphogenesis including nhr-25, vav-1 and arl-1 in tail tip cells. In males, plays a role in the development of ray A-neurons by negatively regulating the activity of the transcription factor ast-1. Plays a role in the male-specific differentiation of PHC sensory neurons into densely connected hub sensory neurons. Plays a role in male mating behavior. The protein is Doublesex- and mab-3-related transcription factor dmd-3 of Caenorhabditis elegans.